The sequence spans 191 residues: NAD(P)H-quinone oxidoreductase subunit L, chloroplastic (191 aa).

A chloroplast-targeting transit peptide spans 1-46 (MSRCGSLGLYAPNALPSLSLKPRSVKSPFCITSHTKPNDTLLHNVN). 3 consecutive transmembrane segments (helical) span residues 61-81 (TILA…ALAI), 93-113 (VVLD…PIIM), and 129-149 (YLQF…APFL).

Belongs to the NDH complex subunit L family. In terms of assembly, part of the chloroplast NDH complex, composed of a mixture of chloroplast and nucleus encoded subunits. Component of the NDH subcomplex A, at least composed of ndhH, ndhI, ndhJ, ndhK, ndhL, ndhM, ndhN and ndhO.

Its subcellular location is the plastid. It localises to the chloroplast thylakoid membrane. It catalyses the reaction a plastoquinone + NADH + (n+1) H(+)(in) = a plastoquinol + NAD(+) + n H(+)(out). It carries out the reaction a plastoquinone + NADPH + (n+1) H(+)(in) = a plastoquinol + NADP(+) + n H(+)(out). In terms of biological role, NDH shuttles electrons from NAD(P)H:plastoquinone, via FMN and iron-sulfur (Fe-S) centers, to quinones in the photosynthetic chain and possibly in a chloroplast respiratory chain. The immediate electron acceptor for the enzyme in this species is believed to be plastoquinone. Couples the redox reaction to proton translocation, and thus conserves the redox energy in a proton gradient. The polypeptide is NAD(P)H-quinone oxidoreductase subunit L, chloroplastic (Arabidopsis thaliana (Mouse-ear cress)).